Here is a 748-residue protein sequence, read N- to C-terminus: Serine/threonine-protein kinase CG17528 (748 aa).

Composition is skewed to polar residues over residues 22 to 35 and 47 to 59; these read QASP…SVPS and EKTN…QEDN. 2 disordered regions span residues 22-41 and 47-81; these read QASP…NVVT and EKTN…ELDD. A phosphoserine mark is found at serine 67, serine 70, serine 73, serine 87, serine 88, and serine 89. The residue at position 91 (threonine 91) is a Phosphothreonine. Serine 93 carries the phosphoserine modification. Threonine 100 is modified (phosphothreonine). Doublecortin domains lie at 158–244 and 313–396; these read LRIK…VEYN and RIVT…AEDF. Residues 477–735 form the Protein kinase domain; the sequence is YSLGRIIGDG…SEDILDHSWT (259 aa). ATP contacts are provided by residues 483–491 and lysine 506; that span reads IGDGNFAIV. Aspartate 598 acts as the Proton acceptor in catalysis.

The protein belongs to the protein kinase superfamily. CAMK Ser/Thr protein kinase family. CaMK subfamily.

The catalysed reaction is L-seryl-[protein] + ATP = O-phospho-L-seryl-[protein] + ADP + H(+). It carries out the reaction L-threonyl-[protein] + ATP = O-phospho-L-threonyl-[protein] + ADP + H(+). In Drosophila melanogaster (Fruit fly), this protein is Serine/threonine-protein kinase CG17528.